The primary structure comprises 157 residues: 2-C-methyl-D-erythritol 2,4-cyclodiphosphate synthase (157 aa).

A divalent metal cation-binding residues include Asp-8 and His-10. Residues 8 to 10 and 34 to 35 each bind 4-CDP-2-C-methyl-D-erythritol 2-phosphate; these read DVH and HS. His-42 contacts a divalent metal cation. Residues 56–58, 61–65, 100–106, 132–135, Phe-139, and Arg-142 each bind 4-CDP-2-C-methyl-D-erythritol 2-phosphate; these read DIG, FPDTD, AQAPKMA, and TTTE.

This sequence belongs to the IspF family. In terms of assembly, homotrimer. A divalent metal cation is required as a cofactor.

It catalyses the reaction 4-CDP-2-C-methyl-D-erythritol 2-phosphate = 2-C-methyl-D-erythritol 2,4-cyclic diphosphate + CMP. It functions in the pathway isoprenoid biosynthesis; isopentenyl diphosphate biosynthesis via DXP pathway; isopentenyl diphosphate from 1-deoxy-D-xylulose 5-phosphate: step 4/6. Functionally, involved in the biosynthesis of isopentenyl diphosphate (IPP) and dimethylallyl diphosphate (DMAPP), two major building blocks of isoprenoid compounds. Catalyzes the conversion of 4-diphosphocytidyl-2-C-methyl-D-erythritol 2-phosphate (CDP-ME2P) to 2-C-methyl-D-erythritol 2,4-cyclodiphosphate (ME-CPP) with a corresponding release of cytidine 5-monophosphate (CMP). This is 2-C-methyl-D-erythritol 2,4-cyclodiphosphate synthase from Pseudomonas syringae pv. tomato (strain ATCC BAA-871 / DC3000).